Here is a 429-residue protein sequence, read N- to C-terminus: Ribosomal RNA small subunit methyltransferase B (429 aa).

Residues 254–260, Asp-277, Asp-303, and Asp-322 each bind S-adenosyl-L-methionine; that span reads CAAPGGK. Residue Cys-375 is the Nucleophile of the active site.

The protein belongs to the class I-like SAM-binding methyltransferase superfamily. RsmB/NOP family.

Its subcellular location is the cytoplasm. It carries out the reaction cytidine(967) in 16S rRNA + S-adenosyl-L-methionine = 5-methylcytidine(967) in 16S rRNA + S-adenosyl-L-homocysteine + H(+). Specifically methylates the cytosine at position 967 (m5C967) of 16S rRNA. The protein is Ribosomal RNA small subunit methyltransferase B of Escherichia coli O127:H6 (strain E2348/69 / EPEC).